The sequence spans 217 residues: Ran-binding protein 1 homolog b (217 aa).

Disordered regions lie at residues 1–32 (MASI…QVAP) and 160–217 (ESEE…VPSA). A2 carries the post-translational modification N-acetylalanine. Residues 14–26 (DEEETGANEDEDT) are compositionally biased toward acidic residues. Positions 29–164 (QVAPIVRLEE…FKEVAESEEE (136 aa)) constitute a RanBD1 domain. Basic and acidic residues predominate over residues 181-217 (LTVEEKESEKKPVEKAEENKKSEAVEEKKTEESVPSA).

As to quaternary structure, interacts with the GTP-bound form of RAN1, RAN2 and RAN3.

It localises to the nucleus. The protein resides in the nuclear pore complex. The chain is Ran-binding protein 1 homolog b (RANBP1B) from Arabidopsis thaliana (Mouse-ear cress).